The primary structure comprises 473 residues: Cysteine--tRNA ligase (473 aa).

Position 30 (Cys-30) interacts with Zn(2+). Residues 32 to 42 carry the 'HIGH' region motif; that stretch reads MTVYDYCHIGH. Zn(2+)-binding residues include Cys-213, His-238, and Glu-242. The 'KMSKS' region motif lies at 270 to 274; it reads KMSKS. Lys-273 contacts ATP.

Belongs to the class-I aminoacyl-tRNA synthetase family. As to quaternary structure, monomer. Zn(2+) is required as a cofactor.

Its subcellular location is the cytoplasm. It carries out the reaction tRNA(Cys) + L-cysteine + ATP = L-cysteinyl-tRNA(Cys) + AMP + diphosphate. The polypeptide is Cysteine--tRNA ligase (Acinetobacter baylyi (strain ATCC 33305 / BD413 / ADP1)).